We begin with the raw amino-acid sequence, 264 residues long: MDSRPIGFLDSGVGGLTVVKEMFRQLPEEEVIFIGDQARAPYGPRPAQQIREFTWQMVNFLLTKNVKMIVIACNTATAVAWQEIKEKLDIPVLGVILPGASAAIKSTNLGKVGIIGTPMTVKSDAYRQKIQALSPNTAVVSLACPKFVPIVESNQMSSSLAKKVVYETLSPLVGKLDTLILGCTHYPLLRPIIQNVMGAEVKLIDSGAETVRDISVLLNYFEINHNWQNKHGGHHFYTTASPKGFKEIAEQWLSQEINVERIVL.

Substrate is bound by residues aspartate 10–serine 11 and tyrosine 42–glycine 43. Catalysis depends on cysteine 73, which acts as the Proton donor/acceptor. Asparagine 74–threonine 75 contributes to the substrate binding site. The active-site Proton donor/acceptor is the cysteine 183. Residue threonine 184–histidine 185 participates in substrate binding.

It belongs to the aspartate/glutamate racemases family.

The enzyme catalyses L-glutamate = D-glutamate. It participates in cell wall biogenesis; peptidoglycan biosynthesis. Provides the (R)-glutamate required for cell wall biosynthesis. In Streptococcus agalactiae serotype Ia (strain ATCC 27591 / A909 / CDC SS700), this protein is Glutamate racemase.